We begin with the raw amino-acid sequence, 354 residues long: Uroporphyrinogen decarboxylase (354 aa).

Substrate contacts are provided by residues 27–31, Asp77, Tyr154, Ser209, and His327; that span reads RQAGR.

It belongs to the uroporphyrinogen decarboxylase family. Homodimer.

Its subcellular location is the cytoplasm. The catalysed reaction is uroporphyrinogen III + 4 H(+) = coproporphyrinogen III + 4 CO2. The protein operates within porphyrin-containing compound metabolism; protoporphyrin-IX biosynthesis; coproporphyrinogen-III from 5-aminolevulinate: step 4/4. Functionally, catalyzes the decarboxylation of four acetate groups of uroporphyrinogen-III to yield coproporphyrinogen-III. The protein is Uroporphyrinogen decarboxylase of Saccharophagus degradans (strain 2-40 / ATCC 43961 / DSM 17024).